Here is a 560-residue protein sequence, read N- to C-terminus: DNA ligase B (560 aa).

Residue K124 is the N6-AMP-lysine intermediate of the active site.

The protein belongs to the NAD-dependent DNA ligase family. LigB subfamily.

It catalyses the reaction NAD(+) + (deoxyribonucleotide)n-3'-hydroxyl + 5'-phospho-(deoxyribonucleotide)m = (deoxyribonucleotide)n+m + AMP + beta-nicotinamide D-nucleotide.. Its function is as follows. Catalyzes the formation of phosphodiester linkages between 5'-phosphoryl and 3'-hydroxyl groups in double-stranded DNA using NAD as a coenzyme and as the energy source for the reaction. In Escherichia coli O139:H28 (strain E24377A / ETEC), this protein is DNA ligase B.